The following is a 133-amino-acid chain: Holo-[acyl-carrier-protein] synthase (133 aa).

Positions 8 and 57 each coordinate Mg(2+).

This sequence belongs to the P-Pant transferase superfamily. AcpS family. Mg(2+) serves as cofactor.

The protein localises to the cytoplasm. It carries out the reaction apo-[ACP] + CoA = holo-[ACP] + adenosine 3',5'-bisphosphate + H(+). Functionally, transfers the 4'-phosphopantetheine moiety from coenzyme A to a Ser of acyl-carrier-protein. This is Holo-[acyl-carrier-protein] synthase from Bartonella bacilliformis (strain ATCC 35685 / KC583 / Herrer 020/F12,63).